The primary structure comprises 155 residues: Ribosome maturation factor RimP (155 aa).

The protein belongs to the RimP family.

The protein localises to the cytoplasm. Functionally, required for maturation of 30S ribosomal subunits. In Staphylococcus aureus (strain JH9), this protein is Ribosome maturation factor RimP.